An 895-amino-acid polypeptide reads, in one-letter code: Catenin alpha-3 (895 aa).

A Phosphoserine modification is found at serine 56. Residues 74–111 are a coiled coil; that stretch reads EKIAQEATVLKDELTASLEEVRKESEALKVSAERFTDD. A Phosphoserine modification is found at serine 160. A coiled-coil region spans residues 325-379; it reads RERIIAECNAIRQALQDLLSEYMNNAGKKERSNTLNIALDNMCKKTRDLRRQLRK. 2 positions are modified to phosphoserine: serine 637 and serine 647. Phosphothreonine is present on threonine 649.

Belongs to the vinculin/alpha-catenin family. As to quaternary structure, interacts with CTNNB1. Interacts with PKP2. As to expression, predominantly expressed in heart and testis. Expressed at lower levels in brain, kidney, liver and skeletal muscle.

It is found in the cytoplasm. The protein resides in the cytoskeleton. Its subcellular location is the cell junction. The protein localises to the desmosome. Its function is as follows. May be involved in formation of stretch-resistant cell-cell adhesion complexes. The sequence is that of Catenin alpha-3 from Homo sapiens (Human).